A 452-amino-acid polypeptide reads, in one-letter code: Bifunctional protein GlmU (452 aa).

Positions 1–226 are pyrophosphorylase; sequence MSLSVVILAA…ATEVEGVNTR (226 aa). UDP-N-acetyl-alpha-D-glucosamine is bound by residues 8-11, Lys22, Gln73, 78-79, 100-102, Gly137, Glu151, Asn166, and Asn224; these read LAAG, GT, and YGD. Mg(2+) is bound at residue Asp102. Asn224 provides a ligand contact to Mg(2+). Positions 227–247 are linker; sequence LQLANLERAYQLKKATELLLS. The segment at 248–452 is N-acetyltransferase; it reads GVMLRDPNRF…INNWKRPTKK (205 aa). Residues Arg330 and Lys348 each contribute to the UDP-N-acetyl-alpha-D-glucosamine site. Residue His360 is the Proton acceptor of the active site. UDP-N-acetyl-alpha-D-glucosamine-binding residues include Tyr363 and Asn374. Acetyl-CoA is bound by residues Ala377, 383-384, Ser402, Ala420, and Arg437; that span reads NY.

It in the N-terminal section; belongs to the N-acetylglucosamine-1-phosphate uridyltransferase family. In the C-terminal section; belongs to the transferase hexapeptide repeat family. As to quaternary structure, homotrimer. It depends on Mg(2+) as a cofactor.

It is found in the cytoplasm. The catalysed reaction is alpha-D-glucosamine 1-phosphate + acetyl-CoA = N-acetyl-alpha-D-glucosamine 1-phosphate + CoA + H(+). It catalyses the reaction N-acetyl-alpha-D-glucosamine 1-phosphate + UTP + H(+) = UDP-N-acetyl-alpha-D-glucosamine + diphosphate. It functions in the pathway nucleotide-sugar biosynthesis; UDP-N-acetyl-alpha-D-glucosamine biosynthesis; N-acetyl-alpha-D-glucosamine 1-phosphate from alpha-D-glucosamine 6-phosphate (route II): step 2/2. The protein operates within nucleotide-sugar biosynthesis; UDP-N-acetyl-alpha-D-glucosamine biosynthesis; UDP-N-acetyl-alpha-D-glucosamine from N-acetyl-alpha-D-glucosamine 1-phosphate: step 1/1. It participates in bacterial outer membrane biogenesis; LPS lipid A biosynthesis. In terms of biological role, catalyzes the last two sequential reactions in the de novo biosynthetic pathway for UDP-N-acetylglucosamine (UDP-GlcNAc). The C-terminal domain catalyzes the transfer of acetyl group from acetyl coenzyme A to glucosamine-1-phosphate (GlcN-1-P) to produce N-acetylglucosamine-1-phosphate (GlcNAc-1-P), which is converted into UDP-GlcNAc by the transfer of uridine 5-monophosphate (from uridine 5-triphosphate), a reaction catalyzed by the N-terminal domain. The sequence is that of Bifunctional protein GlmU from Psychromonas ingrahamii (strain DSM 17664 / CCUG 51855 / 37).